A 427-amino-acid chain; its full sequence is Pre-mRNA-splicing factor PRP46 (427 aa).

WD repeat units follow at residues 113-153 (GHHG…LKVT), 156-195 (AHDMTVRDLAISNRHPYMFSVSEDKTVKCWDLEKNTAIRN), 198-237 (GHLSGVHTVDIHPTVDVVVTAGRDSVVKVWDIRTRLPVMT), 240-281 (GHKG…KVLT), 283-322 (HQRTVRDISVHPSEFSFASACTNDIRSWLLPKGELLTNFV), 324-362 (QDLDVINTVSINQDDVLFAGSDNGSLTFFDYKSGHKYQT), and 373-412 (ESERGILSSTFDGTGLRLLTGETDRTIKIWKQDETASQDT). Residues 404–427 (QDETASQDTHPNLPWNPKLDSQRL) are disordered.

Belongs to the WD repeat PRL1/PRL2 family. Associated with the spliceosome.

It localises to the cytoplasm. Its subcellular location is the nucleus. Its function is as follows. Involved in pre-mRNA splicing and required for cell cycle progression at G2/M. This Candida glabrata (strain ATCC 2001 / BCRC 20586 / JCM 3761 / NBRC 0622 / NRRL Y-65 / CBS 138) (Yeast) protein is Pre-mRNA-splicing factor PRP46 (PRP46).